A 129-amino-acid polypeptide reads, in one-letter code: Small ribosomal subunit protein uS11 (129 aa).

Belongs to the universal ribosomal protein uS11 family. Part of the 30S ribosomal subunit. Interacts with proteins S7 and S18. Binds to IF-3.

In terms of biological role, located on the platform of the 30S subunit, it bridges several disparate RNA helices of the 16S rRNA. Forms part of the Shine-Dalgarno cleft in the 70S ribosome. This chain is Small ribosomal subunit protein uS11, found in Staphylococcus saprophyticus subsp. saprophyticus (strain ATCC 15305 / DSM 20229 / NCIMB 8711 / NCTC 7292 / S-41).